Reading from the N-terminus, the 1505-residue chain is Phosphatidylinositol 3-kinase C2 domain-containing subunit gamma (1505 aa).

A disordered region spans residues 1-32 (MAYNWQTEPNRAEPQEGGHDHQQCHHADQHLS). Basic and acidic residues predominate over residues 10-31 (NRAEPQEGGHDHQQCHHADQHL). The 93-residue stretch at 278–370 (PSRLFADTQF…IQLHLQRSRD (93 aa)) folds into the PI3K-RBD domain. The 149-residue stretch at 540-688 (LHSHLSFTVC…TPLTLQIDFP (149 aa)) folds into the C2 PI3K-type domain. The PIK helical domain maps to 703–879 (RTDHQEPPRE…QELLAALQFC (177 aa)). Residues 948 to 1226 (DRDACSYFTS…KIKQSLECFP (279 aa)) form the PI3K/PI4K catalytic domain. The segment at 954–960 (YFTSNAL) is G-loop. The catalytic loop stretch occupies residues 1090–1098 (GVCDRHNDN). Residues 1109–1135 (HIDFGKFLGHAQTFGGIKRDRAPFIFT) are activation loop. A PX domain is found at 1259–1371 (LNKTRTIQRV…SFFLSEHIQQ (113 aa)). The C2 domain occupies 1384–1505 (HSPDKSPQVQ…KWYPLGNSII (122 aa)).

The protein belongs to the PI3/PI4-kinase family. As to expression, predominantly expressed in normal liver. High levels also found in regenerating liver. Very low levels found in heart and testis.

Its subcellular location is the membrane. The catalysed reaction is a 1,2-diacyl-sn-glycero-3-phospho-(1D-myo-inositol) + ATP = a 1,2-diacyl-sn-glycero-3-phospho-(1D-myo-inositol-3-phosphate) + ADP + H(+). It catalyses the reaction a 1,2-diacyl-sn-glycero-3-phospho-(1D-myo-inositol 4-phosphate) + ATP = a 1,2-diacyl-sn-glycero-3-phospho-(1D-myo-inositol-3,4-bisphosphate) + ADP + H(+). Functionally, generates phosphatidylinositol 3-phosphate (PtdIns3P) and phosphatidylinositol 3,4-bisphosphate (PtdIns(3,4)P2) that act as second messengers. May play a role in SDF1A-stimulated chemotaxis. The protein is Phosphatidylinositol 3-kinase C2 domain-containing subunit gamma (Pik3c2g) of Rattus norvegicus (Rat).